We begin with the raw amino-acid sequence, 310 residues long: Probable deoxyhypusine synthase (310 aa).

K284 functions as the Nucleophile in the catalytic mechanism.

The protein belongs to the deoxyhypusine synthase family. NAD(+) is required as a cofactor.

It catalyses the reaction [eIF5A protein]-L-lysine + spermidine = [eIF5A protein]-deoxyhypusine + propane-1,3-diamine. Its pathway is protein modification; eIF5A hypusination. Functionally, catalyzes the NAD-dependent oxidative cleavage of spermidine and the subsequent transfer of the butylamine moiety of spermidine to the epsilon-amino group of a specific lysine residue of the eIF-5A precursor protein to form the intermediate deoxyhypusine residue. This chain is Probable deoxyhypusine synthase (dys), found in Thermoplasma acidophilum (strain ATCC 25905 / DSM 1728 / JCM 9062 / NBRC 15155 / AMRC-C165).